A 463-amino-acid polypeptide reads, in one-letter code: Chaperone SurA (463 aa).

A signal peptide spans 1-25 (MTKPFSVVLASLLAITSTVSPLASA). PpiC domains follow at residues 174–276 (GSQY…KLVE) and 289–388 (VTEY…QRVG). Disordered regions lie at residues 329–348 (ATAKESSEDTNSRGQGGDLG) and 431–463 (YRTGDRADDNATAAPAKSPDPAAPSPPPAKPTR). Residues 441–450 (ATAAPAKSPD) show a composition bias toward low complexity. Over residues 451-463 (PAAPSPPPAKPTR) the composition is skewed to pro residues.

It localises to the periplasm. The enzyme catalyses [protein]-peptidylproline (omega=180) = [protein]-peptidylproline (omega=0). Its function is as follows. Chaperone involved in the correct folding and assembly of outer membrane proteins. Recognizes specific patterns of aromatic residues and the orientation of their side chains, which are found more frequently in integral outer membrane proteins. May act in both early periplasmic and late outer membrane-associated steps of protein maturation. The sequence is that of Chaperone SurA from Xanthomonas axonopodis pv. citri (strain 306).